The chain runs to 246 residues: Enolase-phosphatase E1 (246 aa).

Residues D15 and E17 each coordinate Mg(2+). Residues 134–135 (SS) and K174 contribute to the substrate site. D201 contributes to the Mg(2+) binding site.

This sequence belongs to the HAD-like hydrolase superfamily. MasA/MtnC family. Monomer. Requires Mg(2+) as cofactor.

The protein resides in the cytoplasm. The protein localises to the nucleus. It catalyses the reaction 5-methylsulfanyl-2,3-dioxopentyl phosphate + H2O = 1,2-dihydroxy-5-(methylsulfanyl)pent-1-en-3-one + phosphate. Its pathway is amino-acid biosynthesis; L-methionine biosynthesis via salvage pathway; L-methionine from S-methyl-5-thio-alpha-D-ribose 1-phosphate: step 3/6. The protein operates within amino-acid biosynthesis; L-methionine biosynthesis via salvage pathway; L-methionine from S-methyl-5-thio-alpha-D-ribose 1-phosphate: step 4/6. Bifunctional enzyme that catalyzes the enolization of 2,3-diketo-5-methylthiopentyl-1-phosphate (DK-MTP-1-P) into the intermediate 2-hydroxy-3-keto-5-methylthiopentenyl-1-phosphate (HK-MTPenyl-1-P), which is then dephosphorylated to form the acireductone 1,2-dihydroxy-3-keto-5-methylthiopentene (DHK-MTPene). This chain is Enolase-phosphatase E1, found in Debaryomyces hansenii (strain ATCC 36239 / CBS 767 / BCRC 21394 / JCM 1990 / NBRC 0083 / IGC 2968) (Yeast).